Consider the following 382-residue polypeptide: Lipid-A-disaccharide synthase (382 aa).

The protein belongs to the LpxB family.

It catalyses the reaction 2-N,3-O-bis[(3R)-3-hydroxytetradecanoyl]-alpha-D-glucosaminyl 1-phosphate + UDP-2-N,3-O-bis[(3R)-3-hydroxytetradecanoyl]-alpha-D-glucosamine = lipid A disaccharide (E. coli) + UDP + H(+). The catalysed reaction is a lipid X + a UDP-2-N,3-O-bis[(3R)-3-hydroxyacyl]-alpha-D-glucosamine = a lipid A disaccharide + UDP + H(+). It functions in the pathway glycolipid biosynthesis; lipid IV(A) biosynthesis; lipid IV(A) from (3R)-3-hydroxytetradecanoyl-[acyl-carrier-protein] and UDP-N-acetyl-alpha-D-glucosamine: step 5/6. In terms of biological role, condensation of UDP-2,3-diacylglucosamine and 2,3-diacylglucosamine-1-phosphate to form lipid A disaccharide, a precursor of lipid A, a phosphorylated glycolipid that anchors the lipopolysaccharide to the outer membrane of the cell. The protein is Lipid-A-disaccharide synthase of Escherichia coli (strain SMS-3-5 / SECEC).